A 253-amino-acid chain; its full sequence is Kallikrein-7 (253 aa).

A signal peptide spans 1–22 (MARSLLLPLQILLLSLALETAG). The propeptide at 23-29 (EEAQGDK) is activation peptide. Residues 30–250 (IIDGAPCARG…FTKWINDTMK (221 aa)) form the Peptidase S1 domain. Intrachain disulfides connect cysteine 36/cysteine 165, cysteine 55/cysteine 71, cysteine 137/cysteine 239, cysteine 144/cysteine 211, cysteine 176/cysteine 190, and cysteine 201/cysteine 226. Catalysis depends on charge relay system residues histidine 70 and aspartate 112. Serine 205 acts as the Charge relay system in catalysis. A glycan (N-linked (GlcNAc...) asparagine) is linked at asparagine 246.

This sequence belongs to the peptidase S1 family. Kallikrein subfamily. As to expression, abundantly expressed in the skin and is expressed by keratinocytes in the epidermis. Also expressed in the brain, mammary gland, cerebellum, spinal cord and kidney. Lower levels in salivary glands, uterus, thymus, thyroid, placenta, trachea and testis. Up-regulated in ovarian carcinoma, especially late-stage serous carcinoma, compared with normal ovaries and benign adenomas (at protein level).

The protein resides in the secreted. It catalyses the reaction Cleavage of proteins with aromatic side chains in the P1 position.. Inhibited by Zn2+ and Cu2+ at low micromolar concentrations. Inhibited by SERPINA12. In terms of biological role, may catalyze the degradation of intercellular cohesive structures in the cornified layer of the skin in the continuous shedding of cells from the skin surface. Specific for amino acid residues with aromatic side chains in the P1 position. Cleaves insulin A chain at '14-Tyr-|-Gln-15' and insulin B chain at '6-Leu-|-Cys-7', '16-Tyr-|-Leu-17', '25-Phe-|-Tyr-26' and '26-Tyr-|-Thr-27'. Could play a role in the activation of precursors to inflammatory cytokines. The chain is Kallikrein-7 (KLK7) from Homo sapiens (Human).